We begin with the raw amino-acid sequence, 306 residues long: MVSFTVSVPATTANIGPGFDCLGAALGLYNHVTVTDPTDPEVDLLIEARGRDGEKISTTKDNLLYQAIAYFYQQTGQAIPPLKLEIDLEIPLARGLGSSATAIVGGLLAANQAAGNPCTTSEILQMAIAMEGHPDNVAPALLGGCQLAVKNGDHWQLVALDWPSKFVPVLAIPNFELSTEAARAVLPHQYDRSAAIFNASHLALLVQAFSQGRGDWLALALQDQIHQPYRQSLIPAYDQLHQAALAAGAYNLVISGAGPTLLAIADEVRAPQIASTLVETWHDAGIEAESHCLPIDTKGATITKLR.

91–101 provides a ligand contact to ATP; the sequence is PLARGLGSSAT.

Belongs to the GHMP kinase family. Homoserine kinase subfamily.

Its subcellular location is the cytoplasm. It catalyses the reaction L-homoserine + ATP = O-phospho-L-homoserine + ADP + H(+). Its pathway is amino-acid biosynthesis; L-threonine biosynthesis; L-threonine from L-aspartate: step 4/5. In terms of biological role, catalyzes the ATP-dependent phosphorylation of L-homoserine to L-homoserine phosphate. In Synechocystis sp. (strain ATCC 27184 / PCC 6803 / Kazusa), this protein is Homoserine kinase.